The following is a 555-amino-acid chain: CTL-like protein DDB_G0274487 (555 aa).

Residues 1–17 are compositionally biased toward polar residues; the sequence is MGIEDNSQQPNTGSPYG. Residues 1–101 are disordered; the sequence is MGIEDNSQQP…NLNKANDRES (101 aa). Residues 19–63 show a composition bias toward low complexity; sequence SPPSQYNPYGQQPPQQQQYNPYGEQQQQPQQQQQYGYQPQFQPTY. Positions 79 to 90 are enriched in pro residues; the sequence is PFPPQQQQPPPI. N116 carries an N-linked (GlcNAc...) asparagine glycan. A helical transmembrane segment spans residues 138 to 158; it reads IWFSILFGLNFGLLIVVSASA. N174 carries an N-linked (GlcNAc...) asparagine glycan. Helical transmembrane passes span 182–202, 210–230, 231–251, 284–304, 313–333, 340–360, 372–392, 405–425, 472–492, and 493–513; these read FLFA…WAWL, ESLI…YCVF, FFVW…FFII, AGYV…SAFA, AIQT…FHVI, TVSG…VGMP, LTTS…IETL, VVVK…SSIV, IAIG…LISI, and PFDM…LVII.

The protein belongs to the CTL (choline transporter-like) family.

Its subcellular location is the membrane. This chain is CTL-like protein DDB_G0274487, found in Dictyostelium discoideum (Social amoeba).